A 168-amino-acid polypeptide reads, in one-letter code: UPF0304 protein MJECS11 (168 aa).

This sequence belongs to the UPF0304 family.

In Methanocaldococcus jannaschii (strain ATCC 43067 / DSM 2661 / JAL-1 / JCM 10045 / NBRC 100440) (Methanococcus jannaschii), this protein is UPF0304 protein MJECS11.